A 292-amino-acid chain; its full sequence is 33 kDa chaperonin (292 aa).

Disulfide bonds link cysteine 230–cysteine 232 and cysteine 263–cysteine 266.

The protein belongs to the HSP33 family. Under oxidizing conditions two disulfide bonds are formed involving the reactive cysteines. Under reducing conditions zinc is bound to the reactive cysteines and the protein is inactive.

The protein localises to the cytoplasm. Functionally, redox regulated molecular chaperone. Protects both thermally unfolding and oxidatively damaged proteins from irreversible aggregation. Plays an important role in the bacterial defense system toward oxidative stress. The chain is 33 kDa chaperonin from Salmonella choleraesuis (strain SC-B67).